We begin with the raw amino-acid sequence, 847 residues long: Alpha-glucuronidase (847 aa).

The signal sequence occupies residues Met1–Ala19. Asn52, Asn238, Asn321, Asn353, Asn586, Asn692, Asn740, and Asn767 each carry an N-linked (GlcNAc...) asparagine glycan.

This sequence belongs to the glycosyl hydrolase 67 family.

It localises to the secreted. The enzyme catalyses an alpha-D-glucuronoside + H2O = D-glucuronate + an alcohol. In terms of biological role, releases 4-O-methylglucuronic acid from xylan. The chain is Alpha-glucuronidase from Hypocrea jecorina (Trichoderma reesei).